Reading from the N-terminus, the 196-residue chain is ATP synthase subunit b (196 aa).

Residues 24-44 (PLSELLIGTLSFALLVAFFFW) traverse the membrane as a helical segment.

The protein belongs to the ATPase B chain family. F-type ATPases have 2 components, F(1) - the catalytic core - and F(0) - the membrane proton channel. F(1) has five subunits: alpha(3), beta(3), gamma(1), delta(1), epsilon(1). F(0) has three main subunits: a(1), b(2) and c(10-14). The alpha and beta chains form an alternating ring which encloses part of the gamma chain. F(1) is attached to F(0) by a central stalk formed by the gamma and epsilon chains, while a peripheral stalk is formed by the delta and b chains.

The protein localises to the cell membrane. Its function is as follows. F(1)F(0) ATP synthase produces ATP from ADP in the presence of a proton or sodium gradient. F-type ATPases consist of two structural domains, F(1) containing the extramembraneous catalytic core and F(0) containing the membrane proton channel, linked together by a central stalk and a peripheral stalk. During catalysis, ATP synthesis in the catalytic domain of F(1) is coupled via a rotary mechanism of the central stalk subunits to proton translocation. Functionally, component of the F(0) channel, it forms part of the peripheral stalk, linking F(1) to F(0). The polypeptide is ATP synthase subunit b (Frankia casuarinae (strain DSM 45818 / CECT 9043 / HFP020203 / CcI3)).